Reading from the N-terminus, the 372-residue chain is Beta-1,4-galactosyltransferase 2 (372 aa).

Residues 1-15 lie on the Cytoplasmic side of the membrane; it reads MSRLLGGTLERVCKA. The helical; Signal-anchor for type II membrane protein transmembrane segment at 16-36 threads the bilayer; sequence VLLLCLLHFLVAVILYFDVYA. The Lumenal portion of the chain corresponds to 37 to 372; that stretch reads QHLAFFSRFS…GRPPSWPPRG (336 aa). The interval 56–97 is disordered; that stretch reads PAASSSSSSSNCSRPNATASSSGLPEVPSALPGPTAPTLPPC. Asn66 and Asn71 each carry an N-linked (GlcNAc...) asparagine glycan. A compositionally biased stretch (polar residues) spans 66 to 78; the sequence is NCSRPNATASSSG. A disulfide bridge links Cys97 with Cys139. Residues 150–154, 189–191, 217–218, and Trp278 each bind UDP-alpha-D-galactose; these read PFRHR, FNR, and VD. A disulfide bridge connects residues Cys211 and Cys230. Asp218 is a Mn(2+) binding site. 280–283 is a binding site for N-acetyl-D-glucosamine; the sequence is GEDD. Residue His311 participates in Mn(2+) binding. 311–313 lines the UDP-alpha-D-galactose pocket; the sequence is HDR. Position 323 (Arg323) interacts with N-acetyl-D-glucosamine. N-linked (GlcNAc...) asparagine glycosylation occurs at Asn357.

Belongs to the glycosyltransferase 7 family. Mn(2+) is required as a cofactor. Weakly expressed in various tissues. Highest expression in prostate, testis, ovary, intestine, muscle, and in fetal brain.

It is found in the golgi apparatus. Its subcellular location is the golgi stack membrane. It catalyses the reaction D-glucose + UDP-alpha-D-galactose = lactose + UDP + H(+). It carries out the reaction an N-acetyl-beta-D-glucosaminyl derivative + UDP-alpha-D-galactose = a beta-D-galactosyl-(1-&gt;4)-N-acetyl-beta-D-glucosaminyl derivative + UDP + H(+). The catalysed reaction is N-acetyl-D-glucosamine + UDP-alpha-D-galactose = beta-D-galactosyl-(1-&gt;4)-N-acetyl-D-glucosamine + UDP + H(+). The protein operates within protein modification; protein glycosylation. In terms of biological role, responsible for the synthesis of complex-type N-linked oligosaccharides in many glycoproteins as well as the carbohydrate moieties of glycolipids. Can produce lactose. In Homo sapiens (Human), this protein is Beta-1,4-galactosyltransferase 2.